The sequence spans 170 residues: uncharacterized protein (170 aa).

Helical transmembrane passes span isoleucine 31–phenylalanine 51, leucine 58–phenylalanine 78, and isoleucine 133–phenylalanine 153.

To M.jannaschii MJ0554 and MJ0587.

It is found in the cell membrane. This is an uncharacterized protein from Methanocaldococcus jannaschii (strain ATCC 43067 / DSM 2661 / JAL-1 / JCM 10045 / NBRC 100440) (Methanococcus jannaschii).